A 525-amino-acid polypeptide reads, in one-letter code: tRNA(Ile)-lysidine synthase (525 aa).

32-37 provides a ligand contact to ATP; it reads SGGRDS.

The protein belongs to the tRNA(Ile)-lysidine synthase family.

It localises to the cytoplasm. The enzyme catalyses cytidine(34) in tRNA(Ile2) + L-lysine + ATP = lysidine(34) in tRNA(Ile2) + AMP + diphosphate + H(+). Its function is as follows. Ligates lysine onto the cytidine present at position 34 of the AUA codon-specific tRNA(Ile) that contains the anticodon CAU, in an ATP-dependent manner. Cytidine is converted to lysidine, thus changing the amino acid specificity of the tRNA from methionine to isoleucine. The polypeptide is tRNA(Ile)-lysidine synthase (Psychrobacter sp. (strain PRwf-1)).